The primary structure comprises 142 residues: ATP synthase epsilon chain (142 aa).

It belongs to the ATPase epsilon chain family. F-type ATPases have 2 components, CF(1) - the catalytic core - and CF(0) - the membrane proton channel. CF(1) has five subunits: alpha(3), beta(3), gamma(1), delta(1), epsilon(1). CF(0) has three main subunits: a, b and c.

The protein resides in the cell inner membrane. In terms of biological role, produces ATP from ADP in the presence of a proton gradient across the membrane. This Pasteurella multocida (strain Pm70) protein is ATP synthase epsilon chain.